Here is a 358-residue protein sequence, read N- to C-terminus: Peptide chain release factor 1 (358 aa).

N5-methylglutamine is present on glutamine 233.

This sequence belongs to the prokaryotic/mitochondrial release factor family. Methylated by PrmC. Methylation increases the termination efficiency of RF1.

It is found in the cytoplasm. Peptide chain release factor 1 directs the termination of translation in response to the peptide chain termination codons UAG and UAA. This is Peptide chain release factor 1 from Geobacillus sp. (strain WCH70).